The primary structure comprises 853 residues: DNA mismatch repair protein MutS (853 aa).

614 to 621 provides a ligand contact to ATP; it reads GPNMGGKS.

The protein belongs to the DNA mismatch repair MutS family.

This protein is involved in the repair of mismatches in DNA. It is possible that it carries out the mismatch recognition step. This protein has a weak ATPase activity. This chain is DNA mismatch repair protein MutS, found in Escherichia coli (strain K12 / MC4100 / BW2952).